Reading from the N-terminus, the 557-residue chain is MSDPEMGWVPEPPTMTLGASRVELRVSCHGLLDRDTLTKPHPCVLLKLYSDEQWVEVERTEVLRSCSSPVFSRVLALEYFFEEKQPLQFHVFDAEDGATSPRNDTFLGSTECTLGQIVSQTKVTKPLLLKNGKTAGKSTITIVAEEVSGTNDYVQLTFRAYKLDNKDLFSKSDPFMEIYKTNEDQSDQLVWRTEVVKNNLNPSWEPFRLSLHSLCSCDVHRPLKFLVYDYDSSGKHDFIGEFTSTFQEMQEGTANPGQEMQWDCINPKYRDKKKNYKSSGTVVLAQCTVEKVHTFLDYIMGGCQISFTVAIDFTASNGDPRSSQSLHCLSPRQPNHYLQALRAVGGICQDYDSDKRFPAFGFGARIPPNFEVSHDFAINFDPENPECEEISGVIASYRRCLPQIQLYGPTNVAPIINRVAEPAQREQSTGQATKYSVLLVLTDGVVSDMAETRTAIVRASRLPMSIIIVGVGNADFSDMRLLDGDDGPLRCPRGVPAARDIVQFVPFRDFKDAAPSALAKCVLAEVPRQVVEYYASQGISPGAPRPCTLATTPSPSP.

2 consecutive C2 domains span residues 2 to 127 (SDPE…TKPL) and 134 to 263 (TAGK…MQWD). Positions 167, 173, 229, 231, and 237 each coordinate Ca(2+). A linker region region spans residues 244–303 (STFQEMQEGTANPGQEMQWDCINPKYRDKKKNYKSSGTVVLAQCTVEKVHTFLDYIMGGC). The 221-residue stretch at 306–526 (SFTVAIDFTA…ALAKCVLAEV (221 aa)) folds into the VWFA domain.

The protein belongs to the copine family. As to quaternary structure, interacts (via second C2 domain) with OS9 (via C-terminus); this interaction occurs in a calcium-dependent manner in vitro. May interact with NECAB1. Ca(2+) serves as cofactor. Widely expressed in the brain. Expressed weakly in the kidney, liver and fetal heart. Expressed in melanocytes.

It is found in the cytoplasm. Its subcellular location is the cell membrane. The protein localises to the endosome. It localises to the cytoplasmic vesicle. The protein resides in the clathrin-coated vesicle. It is found in the perikaryon. Its subcellular location is the cell projection. The protein localises to the dendrite. Its function is as follows. Calcium-dependent phospholipid-binding protein that plays a role in calcium-mediated intracellular processes. Binds phospholipid membranes in a calcium-dependent manner. Plays a role in dendrite formation by melanocytes. This is Copine-6 from Homo sapiens (Human).